A 534-amino-acid polypeptide reads, in one-letter code: MNCSPPGSSTDTERQSSSSGTPATPCPTLAPTHPVRQANRLPIRLINMLTAHTGHLLHPEYLQPLSSTPISPIELDAKKSPLALLAQTCSQIGKPDPPPSSKLNSVTSSEKESGRSSSLKLGESPLEDKSSFKPYSKGGETRKESGSSAGGSADKAGFRVPSGSCQPFPHAPSPSSRVSSPGQHCDSKNNESQEKKEPEANKGSLETSQANPTLTRASISNSSAESSQSGDVTPSSKSDPPSLGSGHVAPVSPYKPGHSVFPLPPSGIGYHGSIVGAYAGYPSQYVHGLDHTKTSLVGNQLPGTLGLPGKPPSSSPLTGASPPSFMQGLCRDPYCLSYHNASHLGSSSCSTCVHDPSALKSGYPLVYPSHPLHSVHTTMSSSVTPSLSGHPLYTYGFMLQNDPVPHICNWVSASGPCDKRFATSEELLAHLRTHTALPGADKLLAGYPTSSFGSAASCHLHLPPGGPGSPTTLPGSLSLRSPHTLGLSRYHPYGKGHLTTPSGLPVPSLPAGSYYSPYALYGQRLTSASALGYQ.

Disordered stretches follow at residues M1–V35, S90–V251, and Q300–A320. 3 stretches are compositionally biased toward low complexity: residues Q15–P34, R115–S124, and G146–K155. Positions S173–G182 are enriched in polar residues. Basic and acidic residues predominate over residues C185–A200. Positions S204–A217 are enriched in polar residues. Over residues S218–S229 the composition is skewed to low complexity. Positions G230–D239 are enriched in polar residues. The segment at H406–H434 adopts a C2H2-type zinc-finger fold.

This sequence belongs to the Elbow/Noc family.

The protein localises to the nucleus. It is found in the cytoplasm. Transcriptional corepressor which does not bind directly to DNA and may regulate transcription through recruitment of histone deacetylases to gene promoters. Regulates cell adhesion, migration and proliferation. Involved in specification of the lateral neural plate border (NPB). May be required for segmental gene expression during hindbrain development. The sequence is that of Zinc finger protein 703-A (znf703-a) from Xenopus laevis (African clawed frog).